The following is a 1203-amino-acid chain: ATP-dependent helicase/nuclease subunit A (1203 aa).

Positions 4–472 constitute a UvrD-like helicase ATP-binding domain; sequence VKLTPEQNEA…IRLKENFRSR (469 aa). 25-32 contributes to the ATP binding site; sequence ASAGSGKT. The region spanning 503–785 is the UvrD-like helicase C-terminal domain; that stretch reads VQGNISDYPV…RVMTFHKSKG (283 aa).

It belongs to the helicase family. AddA subfamily. As to quaternary structure, heterodimer of AddA and AddB/RexB. Mg(2+) is required as a cofactor.

It carries out the reaction Couples ATP hydrolysis with the unwinding of duplex DNA by translocating in the 3'-5' direction.. The catalysed reaction is ATP + H2O = ADP + phosphate + H(+). Its function is as follows. The heterodimer acts as both an ATP-dependent DNA helicase and an ATP-dependent, dual-direction single-stranded exonuclease. Recognizes the chi site generating a DNA molecule suitable for the initiation of homologous recombination. The AddA nuclease domain is required for chi fragment generation; this subunit has the helicase and 3' -&gt; 5' nuclease activities. This chain is ATP-dependent helicase/nuclease subunit A, found in Lactococcus lactis subsp. cremoris (strain SK11).